The following is a 51-amino-acid chain: uncharacterized protein (51 aa).

Positions 1 to 42 (MKMKTNKYMNMVRPAPPRRADPEGVRDPSTMGGGPNPFLRRS) are disordered.

The protein resides in the mitochondrion. This is an uncharacterized protein from Saccharomyces cerevisiae (strain ATCC 204508 / S288c) (Baker's yeast).